Consider the following 89-residue polypeptide: MALSAAEKAGIVAKYQKVAGDTGSPEVQVALLTANINKLQNHFVAHKADHHSRRGLIRMVNSRRKLLDYLKDKDAPRYSALIQDLGLRR.

It belongs to the universal ribosomal protein uS15 family. As to quaternary structure, part of the 30S ribosomal subunit. Forms a bridge to the 50S subunit in the 70S ribosome, contacting the 23S rRNA.

Functionally, one of the primary rRNA binding proteins, it binds directly to 16S rRNA where it helps nucleate assembly of the platform of the 30S subunit by binding and bridging several RNA helices of the 16S rRNA. Forms an intersubunit bridge (bridge B4) with the 23S rRNA of the 50S subunit in the ribosome. This is Small ribosomal subunit protein uS15 from Cellvibrio japonicus (strain Ueda107) (Pseudomonas fluorescens subsp. cellulosa).